The primary structure comprises 93 residues: Putative protein adenylyltransferase MJ0435 (93 aa).

Residues 26 to 40 carry the GSX(10)DXD motif motif; sequence GSYARNEQKETSDID. Mg(2+) contacts are provided by Asp-38, Asp-40, and Asp-70.

Belongs to the MntA antitoxin family. Probably forms a complex with cognate toxin MJ0434. The cofactor is Mg(2+).

The catalysed reaction is L-tyrosyl-[protein] + ATP = O-(5'-adenylyl)-L-tyrosyl-[protein] + diphosphate. It catalyses the reaction O-(5'-adenylyl)-L-tyrosyl-[protein] + ATP = O-[5'-(adenylyl-(5'-&gt;3')-adenylyl)]-L-tyrosyl-[protein] + diphosphate. Functionally, probable antitoxin component of a putative type VII toxin-antitoxin (TA) system. Neutralizes cognate toxic MJ0434 by di-AMPylation. The chain is Putative protein adenylyltransferase MJ0435 from Methanocaldococcus jannaschii (strain ATCC 43067 / DSM 2661 / JAL-1 / JCM 10045 / NBRC 100440) (Methanococcus jannaschii).